A 426-amino-acid polypeptide reads, in one-letter code: MSTSSKPRKFTAPKGVPDYVPPNSHEFNAVRSTFHHCATVAGYEPVELPIFEDTSLFARGVGESSDVVTKEMYTFEDRGGRSMTLRPEGTAGVMRAVIEHGLDRGQLPAKLVYAGPCFRYERPQAGRYRQFQQVGVEAIGVDDPALDAEVIALAYRCFTSLGLMGFRLELTSLGDSTCRPAYREKLQAFLTSLPLDEETQHRAQINPLRVLDDKRPEVKEMTADAPLMLDYLSDEARAHFETVTGILDDLSVPYTINPRMVRGLDYYTKTCFEFVHDDLGAQSGIGGGGRYDGLMAELGGRDLSGVGFGLGVERALLALETEKKTVTDGSRVEVYGVAMGEEAHRRMPVIINDLRQSGVRADMSYGHRGLKGSMKAADRAGARFALVIGEDELAKSIVQVKDLHEGEQTAVPLDQVVQEVRGRLSA.

Belongs to the class-II aminoacyl-tRNA synthetase family. In terms of assembly, homodimer.

The protein resides in the cytoplasm. It catalyses the reaction tRNA(His) + L-histidine + ATP = L-histidyl-tRNA(His) + AMP + diphosphate + H(+). The polypeptide is Histidine--tRNA ligase (Corynebacterium kroppenstedtii (strain DSM 44385 / JCM 11950 / CIP 105744 / CCUG 35717)).